We begin with the raw amino-acid sequence, 278 residues long: Large ribosomal subunit protein uL2 (278 aa).

The disordered stretch occupies residues 226-278 (NPIDHPHGGGEGRTSGGRHPVTPWGKPTKGKKTRSNKSTDKFILISRHKRKKK).

Belongs to the universal ribosomal protein uL2 family. In terms of assembly, part of the 50S ribosomal subunit. Forms a bridge to the 30S subunit in the 70S ribosome.

One of the primary rRNA binding proteins. Required for association of the 30S and 50S subunits to form the 70S ribosome, for tRNA binding and peptide bond formation. It has been suggested to have peptidyltransferase activity; this is somewhat controversial. Makes several contacts with the 16S rRNA in the 70S ribosome. The polypeptide is Large ribosomal subunit protein uL2 (Rhodopseudomonas palustris (strain HaA2)).